The sequence spans 284 residues: D-tagatose-1,6-bisphosphate aldolase subunit GatY (284 aa).

Aspartate 82 serves as the catalytic Proton donor. The Zn(2+) site is built by histidine 83 and histidine 180. Glycine 181 serves as a coordination point for dihydroxyacetone phosphate. Residue histidine 208 coordinates Zn(2+). Residues glycine 209–serine 211 and asparagine 230–threonine 233 each bind dihydroxyacetone phosphate.

Belongs to the class II fructose-bisphosphate aldolase family. TagBP aldolase GatY subfamily. In terms of assembly, forms a complex with GatZ. Zn(2+) serves as cofactor.

The enzyme catalyses D-tagatofuranose 1,6-bisphosphate = D-glyceraldehyde 3-phosphate + dihydroxyacetone phosphate. It participates in carbohydrate metabolism; D-tagatose 6-phosphate degradation; D-glyceraldehyde 3-phosphate and glycerone phosphate from D-tagatose 6-phosphate: step 2/2. Its function is as follows. Catalytic subunit of the tagatose-1,6-bisphosphate aldolase GatYZ, which catalyzes the reversible aldol condensation of dihydroxyacetone phosphate (DHAP or glycerone-phosphate) with glyceraldehyde 3-phosphate (G3P) to produce tagatose 1,6-bisphosphate (TBP). Requires GatZ subunit for full activity and stability. Is involved in the catabolism of galactitol. In Escherichia coli (strain 55989 / EAEC), this protein is D-tagatose-1,6-bisphosphate aldolase subunit GatY.